Here is a 305-residue protein sequence, read N- to C-terminus: GMP synthase [glutamine-hydrolyzing] subunit B (305 aa).

A GMPS ATP-PPase domain is found at 2–185 (VDVDSFVEDA…LGLEEIISER (184 aa)). An ATP-binding site is contributed by 29–35 (SGGVDSS).

Heterodimer composed of a glutamine amidotransferase subunit (A) and a GMP-binding subunit (B).

The catalysed reaction is XMP + L-glutamine + ATP + H2O = GMP + L-glutamate + AMP + diphosphate + 2 H(+). It functions in the pathway purine metabolism; GMP biosynthesis; GMP from XMP (L-Gln route): step 1/1. Catalyzes the synthesis of GMP from XMP. This chain is GMP synthase [glutamine-hydrolyzing] subunit B, found in Halobacterium salinarum (strain ATCC 29341 / DSM 671 / R1).